A 366-amino-acid polypeptide reads, in one-letter code: Peptide chain release factor 2 (366 aa).

Position 253 is an N5-methylglutamine (Gln-253).

The protein belongs to the prokaryotic/mitochondrial release factor family. In terms of processing, methylated by PrmC. Methylation increases the termination efficiency of RF2.

The protein localises to the cytoplasm. Functionally, peptide chain release factor 2 directs the termination of translation in response to the peptide chain termination codons UGA and UAA. The chain is Peptide chain release factor 2 (prfB) from Buchnera aphidicola subsp. Baizongia pistaciae (strain Bp).